A 555-amino-acid polypeptide reads, in one-letter code: Hydroxylamine reductase (555 aa).

The [4Fe-4S] cluster site is built by Cys5, Cys8, Cys17, and Cys23. Hybrid [4Fe-2O-2S] cluster is bound by residues His248, Glu272, Cys316, Cys408, Cys436, Cys461, Glu496, and Lys498. Cys408 carries the post-translational modification Cysteine persulfide.

Belongs to the HCP family. The cofactor is [4Fe-4S] cluster. It depends on hybrid [4Fe-2O-2S] cluster as a cofactor.

The protein localises to the cytoplasm. The enzyme catalyses A + NH4(+) + H2O = hydroxylamine + AH2 + H(+). In terms of biological role, catalyzes the reduction of hydroxylamine to form NH(3) and H(2)O. This is Hydroxylamine reductase from Natranaerobius thermophilus (strain ATCC BAA-1301 / DSM 18059 / JW/NM-WN-LF).